Reading from the N-terminus, the 259-residue chain is NADPH-dependent reductase BacG (259 aa).

NADP(+) is bound by residues 12 to 15, 34 to 36, 62 to 63, isoleucine 90, lysine 113, and 185 to 191; these read SQGI, SRN, DM, and GFIATDR.

It belongs to the short-chain dehydrogenases/reductases (SDR) family. Homodimer.

It localises to the cytoplasm. It participates in antibiotic biosynthesis; bacilysin biosynthesis. Its function is as follows. Along with the bacABCDEF operon, BacG is involved in the biosynthesis of the nonribosomally synthesized dipeptide antibiotic bacilysin, composed of L-alanine and L-anticapsin. Bacilysin is an irreversible inactivator of the glutaminase domain of glucosamine synthetase. BacG catalyzes the stereoselective reduction of exocyclic-delta(3),delta(5)-dihydro-hydroxyphenylpyruvate (ex-H2HPP), adding a pro-S hydride equivalent to C4 position to yield tetrahydro-hydroxyphenylpyruvate (H4HPP). Although the 3Z,7R-ex-H2HPP isomer is kinetically disfavored by BacB and produced in a smaller quantity than 3E,7R-ex-H2HPP, it is the preferred substrate for the conjugate reduction reaction of BacG. This chain is NADPH-dependent reductase BacG, found in Bacillus subtilis (strain 168).